The chain runs to 189 residues: Translation machinery-associated protein 22 (189 aa).

In terms of domain architecture, SUI1 spans 94 to 165 (VTIKRIERNK…EAKDYIEKLL (72 aa)).

This sequence belongs to the DENR family. In terms of assembly, interacts with the 40S ribosomal subunit.

The protein resides in the cytoplasm. In Debaryomyces hansenii (strain ATCC 36239 / CBS 767 / BCRC 21394 / JCM 1990 / NBRC 0083 / IGC 2968) (Yeast), this protein is Translation machinery-associated protein 22 (TMA22).